The sequence spans 408 residues: MGINEIIMYIMMFFMLIAAVDRILSQFGGSARFLGKFGKSIEGSGGQFEEGFMAMGALGLAMVGMTALAPVLAHVLGPVIIPVYEMLGANPSMFAGTLLACDMGGFFLAKELAGGDVAAWLYSGLILGSMMGPTIVFSIPVALGIIEPSDRRYLALGVLAGIVTIPIGCIAGGLVAMYSGVQINGQPVEFTFALILMNMIPVIIVAILVALGLKFIPEKMINGFQIFAKFLVALITLGLAAAVVKFLLGWELIPGLDPIFMAPGDKPGEVMRAIEVIGSISCVLLGAYPMVLLLTRWFEKPLMSVGKVLNMNNIAAAGMVATLANNIPMFGMMKQMDTRGKVINCAFAVSAAFALGDHLGFAAANMNAMIFPMIVGKLIGGVTAIGVAMMLVPKEDATATKTEAEAQS.

The next 11 membrane-spanning stretches (helical) occupy residues 1–21, 61–81, 89–109, 126–146, 155–175, 192–212, 230–250, 274–294, 313–333, 342–362, and 369–389; these read MGIN…AAVD, AMVG…PVII, ANPS…FFLA, ILGS…LGII, ALGV…GGLV, FALI…VALG, FLVA…LLGW, IEVI…VLLL, NIAA…FGMM, VINC…LGFA, and MIFP…GVAM.

Belongs to the EutH family.

Its subcellular location is the cell inner membrane. It catalyses the reaction ethanolamine(in) = ethanolamine(out). It participates in amine and polyamine degradation; ethanolamine degradation. Its function is as follows. Probably involved in the diffusion of protonated ethanolamine (EA) into the cell at low pH. At low pH most EA is protonated, and this permease becomes necessary. This chain is Probable ethanolamine permease EutH (eutH), found in Escherichia coli (strain K12).